Reading from the N-terminus, the 336-residue chain is CASP-like protein UU1 (336 aa).

Residues Met1 to Asn170 are Cytoplasmic-facing. Residues Phe171–Leu191 traverse the membrane as a helical segment. The Extracellular segment spans residues Gly192 to Gly222. A helical transmembrane segment spans residues Val223–Ile243. Residues Gln244 to Lys261 lie on the Cytoplasmic side of the membrane. Residues Leu262–Ala282 traverse the membrane as a helical segment. The Extracellular segment spans residues Gly283–Ala307. A helical transmembrane segment spans residues Ser308–Val328. The Cytoplasmic segment spans residues Arg329 to Arg336.

This sequence belongs to the Casparian strip membrane proteins (CASP) family. Homodimer and heterodimers.

The protein resides in the cell membrane. The protein is CASP-like protein UU1 of Physcomitrium patens (Spreading-leaved earth moss).